Here is a 341-residue protein sequence, read N- to C-terminus: Serpentine receptor class beta-1 (341 aa).

7 helical membrane-spanning segments follow: residues Ala22–Leu42, Phe66–Ile86, Gly102–Ile122, Leu141–Phe161, Cys188–Val208, Leu240–Ile260, and Gly279–Leu299.

It belongs to the nematode receptor-like protein srb family.

Its subcellular location is the membrane. The sequence is that of Serpentine receptor class beta-1 (srb-1) from Caenorhabditis elegans.